The primary structure comprises 164 residues: CB1 cannabinoid receptor-interacting protein 1 (164 aa).

The protein belongs to the CNRIP family. Interacts with the cannabinoid receptor CNR1 (via C-terminus). Does not interact with cannabinoid receptor CNR2.

Suppresses cannabinoid receptor CNR1-mediated tonic inhibition of voltage-gated calcium channels. In terms of biological role, does not suppress cannabinoid receptor CNR1-mediated tonic inhibition of voltage-gated calcium channels. This is CB1 cannabinoid receptor-interacting protein 1 (CNRIP1) from Homo sapiens (Human).